A 377-amino-acid chain; its full sequence is tRNA-specific 2-thiouridylase MnmA (377 aa).

ATP is bound by residues 8–15 (GMSGGVDS) and Met-34. The interval 94-96 (NPD) is interaction with target base in tRNA. Residue Cys-99 is the Nucleophile of the active site. Cysteines 99 and 201 form a disulfide. An ATP-binding site is contributed by Gly-123. The interval 151-153 (KDQ) is interaction with tRNA. Residue Cys-201 is the Cysteine persulfide intermediate of the active site. An interaction with tRNA region spans residues 315 to 316 (RY).

Belongs to the MnmA/TRMU family.

The protein localises to the cytoplasm. It carries out the reaction S-sulfanyl-L-cysteinyl-[protein] + uridine(34) in tRNA + AH2 + ATP = 2-thiouridine(34) in tRNA + L-cysteinyl-[protein] + A + AMP + diphosphate + H(+). Catalyzes the 2-thiolation of uridine at the wobble position (U34) of tRNA, leading to the formation of s(2)U34. This is tRNA-specific 2-thiouridylase MnmA from Acinetobacter baumannii (strain AB307-0294).